The chain runs to 444 residues: Methylenetetrahydrofolate--tRNA-(uracil-5-)-methyltransferase TrmFO (444 aa).

Residue 9 to 14 participates in FAD binding; it reads GAGMAG.

Belongs to the MnmG family. TrmFO subfamily. FAD serves as cofactor.

It localises to the cytoplasm. The enzyme catalyses uridine(54) in tRNA + (6R)-5,10-methylene-5,6,7,8-tetrahydrofolate + NADH + H(+) = 5-methyluridine(54) in tRNA + (6S)-5,6,7,8-tetrahydrofolate + NAD(+). The catalysed reaction is uridine(54) in tRNA + (6R)-5,10-methylene-5,6,7,8-tetrahydrofolate + NADPH + H(+) = 5-methyluridine(54) in tRNA + (6S)-5,6,7,8-tetrahydrofolate + NADP(+). Catalyzes the folate-dependent formation of 5-methyl-uridine at position 54 (M-5-U54) in all tRNAs. This Cereibacter sphaeroides (strain KD131 / KCTC 12085) (Rhodobacter sphaeroides) protein is Methylenetetrahydrofolate--tRNA-(uracil-5-)-methyltransferase TrmFO.